Consider the following 508-residue polypeptide: Photosystem II CP47 reaction center protein (508 aa).

Transmembrane regions (helical) follow at residues 21-36 (SVHI…WAGS), 101-115 (IVFS…IWHW), 140-156 (GIHL…FGAF), 203-218 (IAAG…FHLS), 237-252 (VLSS…AFVV), and 457-472 (TFAL…HGAR).

It belongs to the PsbB/PsbC family. PsbB subfamily. As to quaternary structure, PSII is composed of 1 copy each of membrane proteins PsbA, PsbB, PsbC, PsbD, PsbE, PsbF, PsbH, PsbI, PsbJ, PsbK, PsbL, PsbM, PsbT, PsbX, PsbY, PsbZ, Psb30/Ycf12, at least 3 peripheral proteins of the oxygen-evolving complex and a large number of cofactors. It forms dimeric complexes. It depends on Binds multiple chlorophylls. PSII binds additional chlorophylls, carotenoids and specific lipids. as a cofactor.

Its subcellular location is the plastid. It localises to the chloroplast thylakoid membrane. Its function is as follows. One of the components of the core complex of photosystem II (PSII). It binds chlorophyll and helps catalyze the primary light-induced photochemical processes of PSII. PSII is a light-driven water:plastoquinone oxidoreductase, using light energy to abstract electrons from H(2)O, generating O(2) and a proton gradient subsequently used for ATP formation. In Chloranthus spicatus (Chulantree), this protein is Photosystem II CP47 reaction center protein.